We begin with the raw amino-acid sequence, 453 residues long: Plasmepsin II (453 aa).

The Cytoplasmic portion of the chain corresponds to 1 to 37 (MDITVREHDFKHGFIKSNSTFDGLNIDNSKNKKKIQK). The propeptide occupies 1–124 (MDITVREHDF…SGLTKTNYLG (124 aa)). The chain crosses the membrane as a helical; Signal-anchor for type II membrane protein span at residues 38-58 (GFQILYVLLFCSVMCGLFYYV). The Lumenal segment spans residues 59 to 453 (YENVWLQRDN…VGIALAKKNL (395 aa)). Residues 140 to 447 (FYGDAEVGDN…DYDNQSVGIA (308 aa)) enclose the Peptidase A1 domain. Asp-158 is an active-site residue. Cys-171 and Cys-176 are disulfide-bonded. Asp-338 is a catalytic residue. Cys-373 and Cys-409 are oxidised to a cystine.

This sequence belongs to the peptidase A1 family. Component of the hemozoin formation complex (HFC) composed of falcipains FP2A and/or FP2B, plasmepsins PMII, PMIII/HAP and PMIV, heme detoxifying protein HDP and falcilysin FLN. The HFC complex is involved in hemoglobin degradation and detoxification of heme in the food vacuole during the asexual blood stage. Post-translationally, not N-glycosylated. Proteolytically cleaved into the soluble active mature form in the digestive vacuole by cysteine protease falcipains; the process begins at the early ring stage. Proteolysis requires an acidic environment. In absence of falcipains, autoprocessing may serve as an alternate activation system.

Its subcellular location is the membrane. The protein localises to the vacuole lumen. It localises to the vacuole membrane. The catalysed reaction is Hydrolysis of the bonds linking certain hydrophobic residues in hemoglobin or globin. Also cleaves small molecules substrates such as Ala-Leu-Glu-Arg-Thr-Phe-|-Phe(NO2)-Ser-Phe-Pro-Thr.. With respect to regulation, inhibited by pepstatin A. Inhibited by KNI derived compounds (KNI-10742, 10743, 10395, 10333, and 10343). Functionally, during the asexual blood stage, participates in initial cleavage of native host hemoglobin (Hb) resulting in Hb denaturation. May cleave preferentially denatured hemoglobin that has been cleaved by PMI. Digestion of host Hb is an essential step which provides the parasite with amino acids for protein synthesis, and regulates osmolarity. In Plasmodium falciparum (isolate 3D7), this protein is Plasmepsin II.